The primary structure comprises 244 residues: Phosphoadenosine 5'-phosphosulfate reductase (244 aa).

Residue Cys239 is the Nucleophile; cysteine thiosulfonate intermediate of the active site.

It belongs to the PAPS reductase family. CysH subfamily.

It is found in the cytoplasm. It catalyses the reaction [thioredoxin]-disulfide + sulfite + adenosine 3',5'-bisphosphate + 2 H(+) = [thioredoxin]-dithiol + 3'-phosphoadenylyl sulfate. Its pathway is sulfur metabolism; hydrogen sulfide biosynthesis; sulfite from sulfate: step 3/3. Its function is as follows. Catalyzes the formation of sulfite from phosphoadenosine 5'-phosphosulfate (PAPS) using thioredoxin as an electron donor. This is Phosphoadenosine 5'-phosphosulfate reductase from Buchnera aphidicola subsp. Acyrthosiphon pisum (strain Tuc7).